A 202-amino-acid polypeptide reads, in one-letter code: Small ribosomal subunit protein uS4c (202 aa).

The S4 RNA-binding domain occupies 90–158 (MRLDNIIFRL…ITKNIELSQK (69 aa)).

It belongs to the universal ribosomal protein uS4 family. As to quaternary structure, part of the 30S ribosomal subunit. Contacts protein S5. The interaction surface between S4 and S5 is involved in control of translational fidelity.

Its subcellular location is the plastid. The protein resides in the chloroplast. In terms of biological role, one of the primary rRNA binding proteins, it binds directly to 16S rRNA where it nucleates assembly of the body of the 30S subunit. Functionally, with S5 and S12 plays an important role in translational accuracy. In Marchantia romanica (Liverwort), this protein is Small ribosomal subunit protein uS4c (rps4).